Consider the following 69-residue polypeptide: Cold shock-like protein CspE (69 aa).

In terms of domain architecture, CSD spans 6–66 (GNVKWFNESK…GAKGPSAANV (61 aa)).

It localises to the cytoplasm. In Escherichia coli O6:H1 (strain CFT073 / ATCC 700928 / UPEC), this protein is Cold shock-like protein CspE (cspE).